The primary structure comprises 525 residues: Alcohol O-acetyltransferase 1 (525 aa).

The membrane association stretch occupies residues 24-41 (GHARRMGSVEDLYVALNR). Residues histidine 191 and aspartate 195 each act as charge relay system in the active site. Residues 508–525 (QESLEELCSIYKALLLGP) are membrane association.

This sequence belongs to the ATF1 alcohol acetyltransferase family.

It is found in the lipid droplet. It localises to the endoplasmic reticulum membrane. It carries out the reaction an aliphatic alcohol + acetyl-CoA = an acetyl ester + CoA. The catalysed reaction is a fatty acyl-CoA + H2O = a fatty acid + CoA + H(+). It catalyses the reaction 3-methylbutanol + acetyl-CoA = 3-methylbutyl acetate + CoA. With respect to regulation, found to be inhibited by cadmium, copper, zinc and mercurium divalent cations and sulfhydryl reagents. Inhibited by the addition of unsaturated fatty acids to the culture. Functionally, major alcohol O-acetyltransferase that uses acetyl-CoA to synthesize acetate esters from various alcohols, producing ethyl acetate, isoamyl acetate, isobutyl acetate, butyl acetate, hexyl acetate, heptyl acetate and octyl acetate. The alcohol acyltransferase activity is promiscuous with regard to alcohol but relatively specific for acetyl-CoA since ATF1 does not use any other acyl-CoAs (C3, C4, C5, C6, C8, C10, C12). Acts also as an efficient thioesterase in vitro with specificity towards medium-chain-length acyl-CoAs. In natural environments, the production of aromatic volatile metabolites promotes dispersal through insect vectors. This chain is Alcohol O-acetyltransferase 1, found in Saccharomyces cerevisiae (strain ATCC 204508 / S288c) (Baker's yeast).